Consider the following 418-residue polypeptide: 3-isopropylmalate dehydratase large subunit (418 aa).

3 residues coordinate [4Fe-4S] cluster: C299, C359, and C362.

The protein belongs to the aconitase/IPM isomerase family. LeuC type 2 subfamily. Heterodimer of LeuC and LeuD. Requires [4Fe-4S] cluster as cofactor.

It catalyses the reaction (2R,3S)-3-isopropylmalate = (2S)-2-isopropylmalate. It participates in amino-acid biosynthesis; L-leucine biosynthesis; L-leucine from 3-methyl-2-oxobutanoate: step 2/4. Its function is as follows. Catalyzes the isomerization between 2-isopropylmalate and 3-isopropylmalate, via the formation of 2-isopropylmaleate. The chain is 3-isopropylmalate dehydratase large subunit from Nitratidesulfovibrio vulgaris (strain DSM 19637 / Miyazaki F) (Desulfovibrio vulgaris).